The chain runs to 549 residues: MFESDLSFYSALLILCCPISIVFFKKFPIKGYTGANKVSLFLQCLIAILNLNILYSFINSLTITLGHDGSSANTLTIDPITTTQQQGHVDYTPIKVSGYTFKNQVATKNLQCDSIVYDQDLDLQVSQAVDLNKPEDLKFFRDKLNELRSLNNIYDLFFQDNEDEVEESILERKWYKFCGSAVWLDKYGVYFMVNRIAYSKKGTRNNPTISVLAGQVFDKNWIELTGKKFPFSGLEFPTILPHYIDEGKEAEKVILGAEDPRVILHEYTNENGIRIQEPLIAFNALSTEVDWKRAMHIYRPLHDPHRIIRLSIENYAPREKEKNWAPFIDGNNLNFVYNFPLRILRCNINNGDCQKVSGPDFNDKSHENAGKLRGGTNLVEIPSQSLPKHLRSRKYWFGIARSHITDCGCVGELYRPHLILISRNKKSDQYELNYVSDLIDFNVNPEPWTPGKTTCSDGKSVLIPNSVAFIKDDYMSVTFSEADKTNKLINAKGWLTYITKMLEFTQERLKDESSDPVLESRLLSKCSTFLAQQYCALSKDTMGWDKLSR.

Residues 1 to 37 are Cytoplasmic-facing; it reads MFESDLSFYSALLILCCPISIVFFKKFPIKGYTGANK. Residues 38–58 form a helical membrane-spanning segment; the sequence is VSLFLQCLIAILNLNILYSFI. The Extracellular segment spans residues 59 to 549; it reads NSLTITLGHD…DTMGWDKLSR (491 aa).

It belongs to the BMT family.

It localises to the membrane. Its function is as follows. Beta-mannosyltransferase involved in cell wall biosynthesis. Required for addition of the second beta-mannose residue to acid-stable fraction of cell wall phosphopeptidomannan, and in elongation of beta-mannose chains on the phosphopeptidomannan acid-labile fraction. In Candida albicans (strain SC5314 / ATCC MYA-2876) (Yeast), this protein is Beta-mannosyltransferase 3 (BMT3).